A 441-amino-acid polypeptide reads, in one-letter code: CBL-interacting serine/threonine-protein kinase 6 (441 aa).

The Protein kinase domain occupies 24 to 278 (YELGRLLGHG…IEKVMDSPWF (255 aa)). ATP contacts are provided by residues 30–38 (LGHGTFAKV) and Lys-53. Asp-146 functions as the Proton acceptor in the catalytic mechanism. Residues 164–193 (DFGLSAFTEHLKQDGLLHTTCGTPAYVAPE) are activation loop. Residue Ser-168 is modified to Phosphoserine. At Thr-182 the chain carries Phosphothreonine. An NAF domain is found at 310 to 334 (EETETLNAFHIIALSEGFDLSPLFE). The interval 341–371 (KREMRFATSRPASSVISSLEEAARVGNKFDV) is PPI.

It belongs to the protein kinase superfamily. CAMK Ser/Thr protein kinase family. SNF1 subfamily. As to quaternary structure, part of a K(+)-channel calcium-sensing kinase/phosphatase complex composed by a calcium sensor CBL (CBL1, CBL2, CBL3 or CBL9), a kinase CIPK (CIPK6, CIPK16 or CIPK23), a phosphatase PP2C (AIP1) and a K(+)-channel (AKT1). Interacts with AKT1, AKT2,CBL1, CBL2, CBL3, CBL4/SOS3 and CBL9. Mn(2+) is required as a cofactor. In terms of processing, autophosphorylated. In terms of tissue distribution, expressed in roots and shoots.

It localises to the endoplasmic reticulum. The enzyme catalyses L-seryl-[protein] + ATP = O-phospho-L-seryl-[protein] + ADP + H(+). The catalysed reaction is L-threonyl-[protein] + ATP = O-phospho-L-threonyl-[protein] + ADP + H(+). In terms of biological role, CIPK serine-threonine protein kinases interact with CBL proteins. Binding of a CBL protein to the regulatory NAF domain of CIPK protein lead to the activation of the kinase in a calcium-dependent manner. Downstream of CBL1, CBL2, CBL3 and CBL9, regulates by phosphorylation the K(+) conductance and uptake of AKT1. Binds to CBL4 to modulate AKT2 activity by promoting a kinase interaction-dependent but phosphorylation-independent translocation of the channel to the plasma membrane. The chain is CBL-interacting serine/threonine-protein kinase 6 (CIPK6) from Arabidopsis thaliana (Mouse-ear cress).